The following is a 4367-amino-acid chain: Dynein heavy chain, cytoplasmic (4367 aa).

The span at 1–13 (MMDSVPSPPPQPS) shows a compositional bias: pro residues. The disordered stretch occupies residues 1–20 (MMDSVPSPPPQPSPDANGVA). Positions 1–1904 (MMDSVPSPPP…HIKMANAKLN (1904 aa)) are stem. Coiled-coil stretches lie at residues 676 to 693 (ARQIERQLDQYMKKVEQV), 1176 to 1215 (IKFASRLGNRMREVYAELEKARKDLEGQAMTANSTAEAVR), 1327 to 1351 (LTHFEQRITKLQEESAMVAKAKEAL), 1557 to 1574 (YKEFEEEASSWEEKLNRV), and 1637 to 1668 (NIPNVQKSLERLAELLNKIQKALGEYLEKERV). AAA regions lie at residues 1905 to 2130 (YGFE…VLVS), 2202 to 2460 (EAIR…FTVA), 2566 to 2815 (EVNT…WVRG), and 2909 to 3179 (TFCE…QGKI). Residue 1943-1950 (GPAGTGKT) participates in ATP binding. Residues 2195–2218 (ASLEKLQEAIRRLAAERQLVVNDI) adopt a coiled-coil conformation. Residues 2240–2247 (GNSGSGKS), 2605–2612 (GPPGSGKT), and 2947–2954 (GVSGSGKT) contribute to the ATP site. Coiled coils occupy residues 3193–3296 (QYVK…LARA), 3423–3481 (PLRE…SRVQ), and 3778–3809 (VIETLETLKTEAAEISAKMSNTEGVMAEVEQI). The stalk stretch occupies residues 3193-3481 (QYVKLYNEKR…AIKAEMSRVQ (289 aa)). 2 AAA regions span residues 3565-3794 (LSTA…EISA) and 4003-4215 (AERF…VIDT).

Belongs to the dynein heavy chain family. As to quaternary structure, consists of at least two heavy chains and a number of intermediate and light chains.

Its subcellular location is the cytoplasm. It is found in the cytoskeleton. Functionally, cytoplasmic dynein acts as a motor for the intracellular retrograde motility of vesicles and organelles along microtubules. Dynein has ATPase activity; the force-producing power stroke is thought to occur on release of ADP. Required to maintain uniform nuclear distribution in hyphae. This chain is Dynein heavy chain, cytoplasmic (ro-1), found in Neurospora crassa (strain ATCC 24698 / 74-OR23-1A / CBS 708.71 / DSM 1257 / FGSC 987).